The primary structure comprises 125 residues: Bublin coiled-coil protein (125 aa).

Residues 46–95 (IRKLDTQLDHLNDYMSKMEERLKAHNDRMMETLKQQKEEREKRRRSFHER) adopt a coiled-coil conformation. The disordered stretch occupies residues 79–125 (KQQKEEREKRRRSFHERMSQNQSEDEEFKKQMSSILKRVQSVKRTEK).

Expressed in many epithelial tissues, including the pharynx, intestine, excretory canal and hypodermis.

It is found in the cell junction. The protein localises to the cytoplasm. Its subcellular location is the cytoskeleton. Functionally, dynamic component of the endotube in intestinal cells, interacts with intermediate filament and regulates intestinal lumen morphology. This is Bublin coiled-coil protein from Caenorhabditis elegans.